The chain runs to 343 residues: Selenide, water dikinase (343 aa).

U16 is a catalytic residue. U16 is a non-standard amino acid (selenocysteine). Residues K19 and 46–48 contribute to the ATP site; that span reads GAE. D49 lines the Mg(2+) pocket. ATP is bound by residues D66, D89, and 137 to 139; that span reads GHT. Residue D89 participates in Mg(2+) binding. Residue D225 coordinates Mg(2+).

The protein belongs to the selenophosphate synthase 1 family. Class I subfamily. In terms of assembly, homodimer. Mg(2+) serves as cofactor.

The catalysed reaction is hydrogenselenide + ATP + H2O = selenophosphate + AMP + phosphate + 2 H(+). Its function is as follows. Synthesizes selenophosphate from selenide and ATP. The sequence is that of Selenide, water dikinase from Citrifermentans bemidjiense (strain ATCC BAA-1014 / DSM 16622 / JCM 12645 / Bem) (Geobacter bemidjiensis).